The primary structure comprises 365 residues: Pre-small/secreted glycoprotein (365 aa).

The N-terminal stretch at 1-32 is a signal peptide; sequence MGASGILQLPRERFRKTSFFVWVIILFHKVFS. N-linked (GlcNAc...) asparagine; by host glycosylation is present at N40. Disulfide bonds link C108/C135 and C121/C147. N-linked (GlcNAc...) asparagine; by host glycans are attached at residues N204, N228, N257, and N268.

Belongs to the filoviruses glycoprotein family. Homodimer; disulfide-linked. The homodimers are linked by two disulfide bonds in a parallel orientation. In terms of assembly, monomer. This precursor is processed into mature sGP and delta-peptide by host furin or furin-like proteases. The cleavage site corresponds to the furin optimal cleavage sequence [KR]-X-[KR]-R. Post-translationally, N-glycosylated. In terms of processing, O-glycosylated.

The protein localises to the secreted. Seems to possess an anti-inflammatory activity as it can reverse the barrier-decreasing effects of TNF alpha. Might therefore contribute to the lack of inflammatory reaction seen during infection in spite the of extensive necrosis and massive virus production. Does not seem to be involved in activation of primary macrophages. Does not seem to interact specifically with neutrophils. In terms of biological role, viroporin that permeabilizes mammalian cell plasma membranes. It acts by altering permeation of ionic compounds and small molecules. This activity may lead to viral enterotoxic activity. The sequence is that of Pre-small/secreted glycoprotein (GP) from Epomops franqueti (Franquet's epauletted fruit bat).